We begin with the raw amino-acid sequence, 1025 residues long: Multidrug resistance protein MdtC (1025 aa).

The next 12 helical transmembrane spans lie at 3–23 (FFALFIYRPVATILLSVAITL), 333–353 (EVEQTLIISVALVILVVFLFL), 360–380 (IIPAVAVPVSLIGTFAAMYLC), 387–407 (LSLMALTIATGFVVDDAIVVL), 431–451 (VGFTVLSMSLSLVAVFLPLLL), 463–483 (FAVTLSVAIGISLLVSLTLTP), 528–548 (LVGVVLLGTIALNIWLYISIP), 853–873 (VILIIAAIATVYIVLGILYES), 875–895 (VHPLTILSTLPSAGVGALLAL), 897–917 (LFNAPFSLIALIGIMLLIGIV), 953–973 (PIMMTTLAALFGALPLVLSGG), and 984–1004 (ITIVGGLVMSQLLTLYTTPVV).

Belongs to the resistance-nodulation-cell division (RND) (TC 2.A.6) family. MdtC subfamily. In terms of assembly, part of a tripartite efflux system composed of MdtA, MdtB and MdtC. MdtC forms a heteromultimer with MdtB.

Its subcellular location is the cell inner membrane. Functionally, the MdtABC tripartite complex confers resistance against novobiocin and deoxycholate. This chain is Multidrug resistance protein MdtC, found in Escherichia fergusonii (strain ATCC 35469 / DSM 13698 / CCUG 18766 / IAM 14443 / JCM 21226 / LMG 7866 / NBRC 102419 / NCTC 12128 / CDC 0568-73).